Here is a 1298-residue protein sequence, read N- to C-terminus: Protein broad-minded (1298 aa).

Residues Y1171 to R1283 enclose the Rab-GAP TBC domain.

As to quaternary structure, interacts with cdk20, which promotes cdk20 stability and function.

The protein localises to the cytoplasm. Its subcellular location is the cell projection. It localises to the cilium. Functionally, required for high-level Shh responses in the developing neural tube. Together with cdk20, controls the structure of the primary cilium by coordinating assembly of the ciliary membrane and axoneme, allowing gli2 to be properly activated in response to SHH signaling. The sequence is that of Protein broad-minded (tbc1d32) from Danio rerio (Zebrafish).